The following is a 242-amino-acid chain: UPF0309 protein BMEA_B0892 (242 aa).

The SIS domain maps to 30–214 (AADLIAAAAR…ARLVGEGDAP (185 aa)).

This sequence belongs to the UPF0309 family.

The polypeptide is UPF0309 protein BMEA_B0892 (Brucella melitensis biotype 2 (strain ATCC 23457)).